We begin with the raw amino-acid sequence, 301 residues long: Mitochondrial import receptor subunit TOM40 homolog (301 aa).

A compositionally biased stretch (polar residues) spans 1-19 (MATPTESELASPIPQTNPG). Residues 1-20 (MATPTESELASPIPQTNPGS) are disordered.

This sequence belongs to the Tom40 family. In terms of assembly, forms part of the preprotein translocase complex of the outer mitochondrial membrane (TOM complex). Interacts with mitochondrial targeting sequences. In terms of tissue distribution, ubiquitously expressed, but highly expressed in the pharyngeal muscles, the nerve ring, the intestine, gonadal sheath and in the tail hypodermis.

It localises to the mitochondrion outer membrane. In terms of biological role, channel-forming protein essential for import of protein precursors into mitochondria. Specifically required for nnt-1 accumulation in the mitochondria and may be involved in the secretion of daf-28/insulin from the mitochondria. Required for embryonic and larval development. In Caenorhabditis elegans, this protein is Mitochondrial import receptor subunit TOM40 homolog.